The following is a 1888-amino-acid chain: Eukaryotic translation initiation factor 4G (1888 aa).

Disordered stretches follow at residues 1-259 (MSFN…PTTP), 391-420 (FDNKQSNAYADTGTSGPRPPYNLPSQTQPL), 449-662 (PLPS…SLQH), 726-761 (VAHSSSPENPGLGNVKNLDLISDDNQDTSSKEKNSE), 838-903 (ADVS…DGEV), 961-1042 (AYKR…SGDR), 1083-1138 (TNVS…DPRL), 1331-1356 (GEREQEEANKVEEEGEVKQSEEEREE), 1462-1605 (KWQQ…PGDL), and 1639-1691 (RFAG…PSLP). Polar residues-rich tracts occupy residues 13–36 (GYTQYRKSGRSNNFNPQRGSSGTH) and 75–84 (VNSTDSSNAP). Over residues 171–183 (DEQKRDQARHESF) the composition is skewed to basic and acidic residues. Positions 185–195 (PVPPMPIPLAP) are enriched in pro residues. 4 stretches are compositionally biased toward polar residues: residues 211–231 (NVGQQLQQKDTGIINQPNTGD), 244–259 (ASPNHPTNQTQKPTTP), 393–405 (NKQSNAYADTGTS), and 458–475 (NSQPHRFNYPVSQGSQNV). Over residues 497 to 506 (PNREHTRDTH) the composition is skewed to basic and acidic residues. A compositionally biased stretch (polar residues) spans 586–596 (IKSSPVISKQF). Low complexity predominate over residues 603–630 (VSLESQDSSSVQSSLTASSEESELAVAH). Residues 631-645 (SEVRRENLLGSDLHK) are compositionally biased toward basic and acidic residues. Residues 840–850 (VSASVSSSSTV) are compositionally biased toward low complexity. Residues 869–885 (NMSSNEVLKNVVKSDQP) show a composition bias toward polar residues. A compositionally biased stretch (basic and acidic residues) spans 963 to 983 (KRPEEKKETVAHSESIERTES). The EIF4E-binding stretch occupies residues 1048 to 1093 (KKYSRDFLLKFAEQFLDLPHNFEVTSDIESLMSTHTNVSHHHDRDP). Residues 1109 to 1124 (RLDRRGSNLVDDDRWS) are compositionally biased toward basic and acidic residues. The 224-residue stretch at 1239 to 1462 (QRQLKAILNK…KDAIDLRKNK (224 aa)) folds into the MIF4G domain. Composition is skewed to basic and acidic residues over residues 1467-1484 (RKVEGPKKIEEVHRDAAQ) and 1661-1674 (KDLRHSGRSFDRSR). The MI domain maps to 1700–1824 (RLQQLSLTAI…SLREVADLIC (125 aa)).

Belongs to the eukaryotic initiation factor 4G family. As to quaternary structure, EIF4F is a multi-subunit complex, the composition of which varies with external and internal environmental conditions. It is composed of at least EIF4A, EIF4E and EIF4G. Interacts directly with eIF4E. In higher plants two isoforms of EIF4F have been identified, named isoform EIF4F and isoform EIF(iso)4F. Isoform EIF4F has subunits p220 and p26, whereas isoform EIF(iso)4F has subunits p82 and p28.

Its function is as follows. Component of the protein complex eIF4F, which is involved in the recognition of the mRNA cap, ATP-dependent unwinding of 5'-terminal secondary structure and recruitment of mRNA to the ribosome. The polypeptide is Eukaryotic translation initiation factor 4G (Cucumis melo (Muskmelon)).